We begin with the raw amino-acid sequence, 206 residues long: Protein GrpE (206 aa).

The protein belongs to the GrpE family. As to quaternary structure, homodimer.

It localises to the cytoplasm. Its function is as follows. Participates actively in the response to hyperosmotic and heat shock by preventing the aggregation of stress-denatured proteins, in association with DnaK and GrpE. It is the nucleotide exchange factor for DnaK and may function as a thermosensor. Unfolded proteins bind initially to DnaJ; upon interaction with the DnaJ-bound protein, DnaK hydrolyzes its bound ATP, resulting in the formation of a stable complex. GrpE releases ADP from DnaK; ATP binding to DnaK triggers the release of the substrate protein, thus completing the reaction cycle. Several rounds of ATP-dependent interactions between DnaJ, DnaK and GrpE are required for fully efficient folding. In Psychromonas ingrahamii (strain DSM 17664 / CCUG 51855 / 37), this protein is Protein GrpE.